We begin with the raw amino-acid sequence, 139 residues long: Large-conductance mechanosensitive channel (139 aa).

A run of 3 helical transmembrane segments spans residues 10–30, 40–60, and 80–100; these read FAVKGNVVDLAVAVIVGAAFG, VIMPVVGKIFGGLDFSNYYIA, and LAYGNFITIALNFIILAFIIF.

It belongs to the MscL family. As to quaternary structure, homopentamer.

The protein localises to the cell inner membrane. Channel that opens in response to stretch forces in the membrane lipid bilayer. May participate in the regulation of osmotic pressure changes within the cell. This is Large-conductance mechanosensitive channel from Janthinobacterium sp. (strain Marseille) (Minibacterium massiliensis).